Reading from the N-terminus, the 103-residue chain is Endoribonuclease MazF3 (103 aa).

This sequence belongs to the PemK/MazF family. Forms a complex with cognate antitoxin MazE3.

In terms of biological role, toxic component of a type II toxin-antitoxin (TA) system. Acts as an endoribonuclease, cleaving in U-rich regions. Neutralized by cognate antitoxin MazE3. This Mycobacterium tuberculosis (strain CDC 1551 / Oshkosh) protein is Endoribonuclease MazF3 (mazF3).